The primary structure comprises 195 residues: ATP-dependent Clp protease proteolytic subunit (195 aa).

Ser-98 functions as the Nucleophile in the catalytic mechanism. The active site involves His-123.

This sequence belongs to the peptidase S14 family. In terms of assembly, fourteen ClpP subunits assemble into 2 heptameric rings which stack back to back to give a disk-like structure with a central cavity, resembling the structure of eukaryotic proteasomes.

It localises to the cytoplasm. It catalyses the reaction Hydrolysis of proteins to small peptides in the presence of ATP and magnesium. alpha-casein is the usual test substrate. In the absence of ATP, only oligopeptides shorter than five residues are hydrolyzed (such as succinyl-Leu-Tyr-|-NHMec, and Leu-Tyr-Leu-|-Tyr-Trp, in which cleavage of the -Tyr-|-Leu- and -Tyr-|-Trp bonds also occurs).. Cleaves peptides in various proteins in a process that requires ATP hydrolysis. Has a chymotrypsin-like activity. Plays a major role in the degradation of misfolded proteins. This Wolinella succinogenes (strain ATCC 29543 / DSM 1740 / CCUG 13145 / JCM 31913 / LMG 7466 / NCTC 11488 / FDC 602W) (Vibrio succinogenes) protein is ATP-dependent Clp protease proteolytic subunit.